The sequence spans 1543 residues: ATP-binding cassette sub-family C member 2 (1543 aa).

Over 1–26 the chain is Extracellular; the sequence is MDEFCNSTFWNLSLLKSPEADLPLCF. 2 N-linked (GlcNAc...) asparagine glycosylation sites follow: asparagine 6 and asparagine 11. Residues 27-47 form a helical membrane-spanning segment; that stretch reads EQTVLVWIPLGFLWLLAPWQL. At 48 to 67 the chain is on the cytoplasmic side; it reads YRIYRSRTKRFAITKFYLAK. Residues 68-88 form a helical membrane-spanning segment; that stretch reads QVFVVCLLILAAIDLSLALTE. Residues 89 to 92 lie on the Extracellular side of the membrane; sequence DTGQ. The helical transmembrane segment at 93-113 threads the bilayer; the sequence is ATIPPVKYTNPILYLCTWLLV. Residues 114–125 lie on the Cytoplasmic side of the membrane; it reads LVIQHCRQCCIQ. A helical transmembrane segment spans residues 126 to 146; sequence KNSWFLSMFWILSLLCGIFQF. Topologically, residues 147–164 are extracellular; that stretch reads QTLIRALLQDSKSNMTYS. Asparagine 160 is a glycosylation site (N-linked (GlcNAc...) asparagine). The chain crosses the membrane as a helical span at residues 165 to 185; it reads CLFFVSYGFQIVILILSAFSE. Topologically, residues 186-311 are cytoplasmic; that stretch reads SSDSTHAPSA…DFPKSWLVKA (126 aa). The tract at residues 260–285 is disordered; sequence LKKSQQSPEGTSHGLTKKQSQSQDVL. The span at 263–283 shows a compositional bias: polar residues; sequence SQQSPEGTSHGLTKKQSQSQD. Phosphoserine is present on residues serine 279 and serine 281. The chain crosses the membrane as a helical span at residues 312–332; it reads LFKTFYVVILKSFILKLAHDI. Residues 320–603 enclose the ABC transmembrane type-1 1 domain; it reads ILKSFILKLA…LPMVISSVIQ (284 aa). Over 333 to 358 the chain is Extracellular; sequence LLFLNPQLLKFLIGFVKDPDSYPWVG. The chain crosses the membrane as a helical span at residues 359-379; the sequence is YIYAILMFSVTLIQSFFLQCY. The Cytoplasmic segment spans residues 380 to 435; it reads FQFCFVLGMTVRTTIIASVYKKALTLSNLARRQYTIGETVNLMSVDSQKLMDVTNY. Residues 436–456 traverse the membrane as a helical segment; it reads IHLLWSSVLQIALSIFFLWRE. The Extracellular portion of the chain corresponds to 457–459; that stretch reads LGP. A helical transmembrane segment spans residues 460–480; sequence SILAGVGLMVLLVPVNGVLAT. Residues 481–542 are Cytoplasmic-facing; sequence KIRKIQVQNM…NLLRFSQLQT (62 aa). Residues 543-563 form a helical membrane-spanning segment; the sequence is ILIFILHLTPTLVSVITFSVY. The Extracellular portion of the chain corresponds to 564-585; that stretch reads VLVDSQNVLNAEKAFTSITLFN. The chain crosses the membrane as a helical span at residues 586–606; that stretch reads ILRFPLAMLPMVISSVIQASV. Topologically, residues 607–969 are cytoplasmic; the sequence is SVDRLEQYLG…VKFSIYLKYL (363 aa). Residues 635 to 859 form the ABC transporter 1 domain; that stretch reads VQFSEASFTW…KGVFAKNWKT (225 aa). 669-676 lines the ATP pocket; the sequence is GTVGSGKS. At serine 876 the chain carries Phosphoserine. The disordered stretch occupies residues 903–927; the sequence is RENSLRRTLSRSSRSGSRRGKSLKS. Residues 908–917 show a composition bias toward low complexity; that stretch reads RRTLSRSSRS. Phosphoserine is present on residues serine 924 and serine 928. A helical transmembrane segment spans residues 970 to 990; that stretch reads QAVGWWSLLFIVIFYVLNYVA. The region spanning 977-1262 is the ABC transmembrane type-1 2 domain; it reads LLFIVIFYVL…LVRMTSEVET (286 aa). Over 991–1031 the chain is Extracellular; the sequence is FIGTNLWLSAWTSDSEKQNGTDNSPSQRDMRIGVFGALGIA. Asparagine 1009 carries an N-linked (GlcNAc...) asparagine glycan. Residues 1032–1052 form a helical membrane-spanning segment; sequence QGIFLLSSSLWSIYACRNASK. Residues 1053–1095 lie on the Cytoplasmic side of the membrane; that stretch reads TLHRQLLTNILRAPMSFFDTTPTGRIVNRFAGDISTVDDTLPQ. The chain crosses the membrane as a helical span at residues 1096–1116; it reads TLRSWLLCFFGIVSTLVMICM. Position 1117 (alanine 1117) is a topological domain, extracellular. The helical transmembrane segment at 1118 to 1138 threads the bilayer; the sequence is TPIFIIIIIPLSILYVSVQVF. Topologically, residues 1139–1209 are cytoplasmic; the sequence is YVATSRQLRR…TSNRWLAIRL (71 aa). The chain crosses the membrane as a helical span at residues 1210 to 1230; the sequence is ELVGNLIVFCSALLLVIYKNS. Over 1231–1232 the chain is Extracellular; that stretch reads LT. A helical transmembrane segment spans residues 1233-1253; that stretch reads GDTVGFVLSNALNITQTLNWL. Residues 1254 to 1543 are Cytoplasmic-facing; sequence VRMTSEVETN…GIESVNHTEL (290 aa). One can recognise an ABC transporter 2 domain in the interval 1298-1532; that stretch reads IQFNNYQVRY…MGPFYLMAKE (235 aa). Position 1332–1339 (1332–1339) interacts with ATP; that stretch reads GRTGAGKS. Serine 1436 is modified (phosphoserine).

The protein belongs to the ABC transporter superfamily. ABCC family. Conjugate transporter (TC 3.A.1.208) subfamily. Expressed in liver.

It localises to the apical cell membrane. It carries out the reaction an S-substituted glutathione(in) + ATP + H2O = an S-substituted glutathione(out) + ADP + phosphate + H(+). The catalysed reaction is taurolithocholate 3-sulfate(in) + ATP + H2O = taurolithocholate 3-sulfate(out) + ADP + phosphate + H(+). The enzyme catalyses ATP + H2O + xenobioticSide 1 = ADP + phosphate + xenobioticSide 2.. It catalyses the reaction leukotriene C4(in) + ATP + H2O = leukotriene C4(out) + ADP + phosphate + H(+). It carries out the reaction 17beta-estradiol 17-O-(beta-D-glucuronate)(in) + ATP + H2O = 17beta-estradiol 17-O-(beta-D-glucuronate)(out) + ADP + phosphate + H(+). The catalysed reaction is (4Z,15Z)-bilirubin IXalpha C8-beta-D-glucuronoside(in) + ATP + H2O = (4Z,15Z)-bilirubin IXalpha C8-beta-D-glucuronoside(out) + ADP + phosphate + H(+). The enzyme catalyses (4Z,15Z)-bilirubin IXalpha C8,C12-beta-D-bisglucuronoside(in) + ATP + H2O = (4Z,15Z)-bilirubin IXalpha C8,C12-beta-D-bisglucuronoside(out) + ADP + phosphate + H(+). Its function is as follows. ATP-dependent transporter of the ATP-binding cassette (ABC) family that binds and hydrolyzes ATP to enable active transport of various substrates including many drugs, toxicants and endogenous compound across cell membranes. Transports a wide variety of conjugated organic anions such as sulfate-, glucuronide- and glutathione (GSH)-conjugates of endo- and xenobiotics substrates. Mediates hepatobiliary excretion of mono- and bis-glucuronidated bilirubin molecules and therefore play an important role in bilirubin detoxification. Mediates also hepatobiliary excretion of others glucuronide conjugates such as 17beta-estradiol 17-glucosiduronic acid and leukotriene C4. Transports sulfated bile salt such as taurolithocholate sulfate. Transports various anticancer drugs, such as anthracycline, vinca alkaloid and methotrexate and HIV-drugs such as protease inhibitors. The sequence is that of ATP-binding cassette sub-family C member 2 from Mus musculus (Mouse).